The following is a 132-amino-acid chain: S-protein homolog 19 (132 aa).

A signal peptide spans 1–26 (MSGSLAFHIIMSVTFMVFFFGGLCEA). A glycan (N-linked (GlcNAc...) asparagine) is linked at asparagine 87.

It belongs to the plant self-incompatibility (S1) protein family.

Its subcellular location is the secreted. In Arabidopsis thaliana (Mouse-ear cress), this protein is S-protein homolog 19.